The primary structure comprises 351 residues: Molybdenum import ATP-binding protein ModC (351 aa).

One can recognise an ABC transporter domain in the interval 1–229 (MLQINVKKQL…PIFAPWKGES (229 aa)). 31 to 38 (GLSGSGKT) provides a ligand contact to ATP. The 63-residue stretch at 289–351 (QTSIRNILRG…YVQIKAVSVM (63 aa)) folds into the Mop domain.

It belongs to the ABC transporter superfamily. Molybdate importer (TC 3.A.1.8) family. As to quaternary structure, the complex is composed of two ATP-binding proteins (ModC), two transmembrane proteins (ModB) and a solute-binding protein (ModA).

The protein resides in the cell inner membrane. It carries out the reaction molybdate(out) + ATP + H2O = molybdate(in) + ADP + phosphate + H(+). Its function is as follows. Part of the ABC transporter complex ModABC involved in molybdenum import. Responsible for energy coupling to the transport system. This chain is Molybdenum import ATP-binding protein ModC, found in Haemophilus influenzae (strain ATCC 51907 / DSM 11121 / KW20 / Rd).